A 485-amino-acid polypeptide reads, in one-letter code: Glycogen synthase (485 aa).

Residue lysine 18 participates in ADP-alpha-D-glucose binding.

Belongs to the glycosyltransferase 1 family. Bacterial/plant glycogen synthase subfamily.

The enzyme catalyses [(1-&gt;4)-alpha-D-glucosyl](n) + ADP-alpha-D-glucose = [(1-&gt;4)-alpha-D-glucosyl](n+1) + ADP + H(+). It functions in the pathway glycan biosynthesis; glycogen biosynthesis. Synthesizes alpha-1,4-glucan chains using ADP-glucose. The sequence is that of Glycogen synthase from Dechloromonas aromatica (strain RCB).